The chain runs to 314 residues: Methionyl-tRNA formyltransferase (314 aa).

(6S)-5,6,7,8-tetrahydrofolate is bound at residue 112 to 115; the sequence is SLLP.

This sequence belongs to the Fmt family.

The enzyme catalyses L-methionyl-tRNA(fMet) + (6R)-10-formyltetrahydrofolate = N-formyl-L-methionyl-tRNA(fMet) + (6S)-5,6,7,8-tetrahydrofolate + H(+). Attaches a formyl group to the free amino group of methionyl-tRNA(fMet). The formyl group appears to play a dual role in the initiator identity of N-formylmethionyl-tRNA by promoting its recognition by IF2 and preventing the misappropriation of this tRNA by the elongation apparatus. This is Methionyl-tRNA formyltransferase from Buchnera aphidicola subsp. Acyrthosiphon pisum (strain 5A).